Reading from the N-terminus, the 376-residue chain is Chaperone protein DnaJ (376 aa).

The region spanning 4–68 is the J domain; that stretch reads DYYDILGVDR…DTRSRYDQFG (65 aa). The CR-type zinc-finger motif lies at 135–217; sequence GGEKEIRIPH…CNGAGRRQVT (83 aa). Zn(2+)-binding residues include cysteine 148, cysteine 151, cysteine 165, cysteine 168, cysteine 191, cysteine 194, cysteine 205, and cysteine 208. CXXCXGXG motif repeat units lie at residues 148 to 155, 165 to 172, 191 to 198, and 205 to 212; these read CQVCKGDG, CSTCNGQG, CPACNGQG, and CEVCNGAG.

The protein belongs to the DnaJ family. In terms of assembly, homodimer. Requires Zn(2+) as cofactor.

It localises to the cytoplasm. Its function is as follows. Participates actively in the response to hyperosmotic and heat shock by preventing the aggregation of stress-denatured proteins and by disaggregating proteins, also in an autonomous, DnaK-independent fashion. Unfolded proteins bind initially to DnaJ; upon interaction with the DnaJ-bound protein, DnaK hydrolyzes its bound ATP, resulting in the formation of a stable complex. GrpE releases ADP from DnaK; ATP binding to DnaK triggers the release of the substrate protein, thus completing the reaction cycle. Several rounds of ATP-dependent interactions between DnaJ, DnaK and GrpE are required for fully efficient folding. Also involved, together with DnaK and GrpE, in the DNA replication of plasmids through activation of initiation proteins. This chain is Chaperone protein DnaJ, found in Crocosphaera subtropica (strain ATCC 51142 / BH68) (Cyanothece sp. (strain ATCC 51142)).